The primary structure comprises 337 residues: Eukaryotic translation initiation factor 3 subunit H (337 aa).

The 134-residue stretch at 25-158 (VQIEGLAVLK…LKALKLSDSF (134 aa)) folds into the MPN domain. S178 carries the phosphoserine; by ATPK1 modification. Residues 267–278 (RRTENMARKSAG) show a composition bias toward basic and acidic residues. The interval 267 to 290 (RRTENMARKSAGEEPLPEEDPSNP) is disordered.

Belongs to the eIF-3 subunit H family. As to quaternary structure, component of the eukaryotic translation initiation factor 3 (eIF-3) complex. Interacts directly with TIF3A1, TIF3B1, TIF3C1, TIF3E1 and TIF3F1. Associates with the CSN (COP9 signalosome) complex. Binds to CSN1, CSN7 and CSN8. Interacts with ATPK1. In response to auxin (NAA), phosphorylated at Ser-178 by ATPK1 and binds to polysomes via TOR signaling. This phosphorylation is repressed by Torin-1. As to expression, mostly expressed in roots and flowers, and, to a lower extent, in leaves, stems and siliques.

The protein resides in the cytoplasm. Functionally, component of the eukaryotic translation initiation factor 3 (eIF-3) complex, which is involved in protein synthesis of a specialized repertoire of mRNAs and, together with other initiation factors, stimulates binding of mRNA and methionyl-tRNAi to the 40S ribosome. The eIF-3 complex specifically targets and initiates translation of a subset of mRNAs involved in cell proliferation (Potential). Regulates translation initiation of specific 5' mRNAs harboring multiple upstream open reading frames (uORFs) in their 5' leader sequence (e.g. BETA-OHASE 2 and LHY). This Arabidopsis thaliana (Mouse-ear cress) protein is Eukaryotic translation initiation factor 3 subunit H (TIF3H1).